The sequence spans 463 residues: Chromosomal replication initiator protein DnaA (463 aa).

The segment at methionine 1–threonine 83 is domain I, interacts with DnaA modulators. The tract at residues threonine 83 to serine 124 is domain II. The segment at threonine 125 to serine 343 is domain III, AAA+ region. ATP contacts are provided by glycine 171, glycine 173, lysine 174, and threonine 175. The tract at residues asparagine 344–histidine 463 is domain IV, binds dsDNA.

It belongs to the DnaA family. In terms of assembly, oligomerizes as a right-handed, spiral filament on DNA at oriC.

It is found in the cytoplasm. Plays an essential role in the initiation and regulation of chromosomal replication. ATP-DnaA binds to the origin of replication (oriC) to initiate formation of the DNA replication initiation complex once per cell cycle. Binds the DnaA box (a 9 base pair repeat at the origin) and separates the double-stranded (ds)DNA. Forms a right-handed helical filament on oriC DNA; dsDNA binds to the exterior of the filament while single-stranded (ss)DNA is stabiized in the filament's interior. The ATP-DnaA-oriC complex binds and stabilizes one strand of the AT-rich DNA unwinding element (DUE), permitting loading of DNA polymerase. After initiation quickly degrades to an ADP-DnaA complex that is not apt for DNA replication. Binds acidic phospholipids. In Rickettsia akari (strain Hartford), this protein is Chromosomal replication initiator protein DnaA.